Consider the following 461-residue polypeptide: Argininosuccinate lyase (461 aa).

The protein belongs to the lyase 1 family. Argininosuccinate lyase subfamily.

The protein resides in the cytoplasm. The catalysed reaction is 2-(N(omega)-L-arginino)succinate = fumarate + L-arginine. Its pathway is amino-acid biosynthesis; L-arginine biosynthesis; L-arginine from L-ornithine and carbamoyl phosphate: step 3/3. The chain is Argininosuccinate lyase from Dehalococcoides mccartyi (strain ATCC BAA-2100 / JCM 16839 / KCTC 5957 / BAV1).